Consider the following 475-residue polypeptide: Ribulose bisphosphate carboxylase large chain (475 aa).

K14 bears the N6,N6,N6-trimethyllysine mark. Substrate contacts are provided by N123 and T173. Catalysis depends on K175, which acts as the Proton acceptor. Residue K177 participates in substrate binding. 3 residues coordinate Mg(2+): K201, D203, and E204. Residue K201 is modified to N6-carboxylysine. H294 serves as the catalytic Proton acceptor. 3 residues coordinate substrate: R295, H327, and S379.

This sequence belongs to the RuBisCO large chain family. Type I subfamily. As to quaternary structure, heterohexadecamer of 8 large chains and 8 small chains; disulfide-linked. The disulfide link is formed within the large subunit homodimers. Requires Mg(2+) as cofactor. Post-translationally, the disulfide bond which can form in the large chain dimeric partners within the hexadecamer appears to be associated with oxidative stress and protein turnover.

The protein localises to the plastid. The catalysed reaction is 2 (2R)-3-phosphoglycerate + 2 H(+) = D-ribulose 1,5-bisphosphate + CO2 + H2O. It catalyses the reaction D-ribulose 1,5-bisphosphate + O2 = 2-phosphoglycolate + (2R)-3-phosphoglycerate + 2 H(+). RuBisCO catalyzes two reactions: the carboxylation of D-ribulose 1,5-bisphosphate, the primary event in carbon dioxide fixation, as well as the oxidative fragmentation of the pentose substrate in the photorespiration process. Both reactions occur simultaneously and in competition at the same active site. The polypeptide is Ribulose bisphosphate carboxylase large chain (rbcL) (Euglena longa (Euglenophycean alga)).